Here is a 1774-residue protein sequence, read N- to C-terminus: Protein TIC 214 (1774 aa).

The next 6 membrane-spanning stretches (helical) occupy residues 19–39, 68–88, 91–111, 133–153, 176–196, and 227–247; these read IINS…FSIG, FIAG…HLAL, PHTI…WNNH, VFLN…SSML, VGWL…LVWI, and IFSI…PSPI. Positions 254–268 are enriched in basic and acidic residues; it reads GTSETEERGGTKQDQ. The segment at 254–275 is disordered; sequence GTSETEERGGTKQDQEVSTEEA.

The protein belongs to the TIC214 family. Part of the Tic complex.

It is found in the plastid. Its subcellular location is the chloroplast inner membrane. Its function is as follows. Involved in protein precursor import into chloroplasts. May be part of an intermediate translocation complex acting as a protein-conducting channel at the inner envelope. The sequence is that of Protein TIC 214 from Aethionema cordifolium (Lebanon stonecress).